The primary structure comprises 577 residues: Aspartate--tRNA ligase (577 aa).

Position 169 (Glu169) interacts with L-aspartate. The aspartate stretch occupies residues 193 to 196 (QLYK). Residue Arg215 participates in L-aspartate binding. Residues 215-217 (RDE) and Gln224 each bind ATP. An L-aspartate-binding site is contributed by His440. Position 474 (Glu474) interacts with ATP. Arg481 contributes to the L-aspartate binding site. 526 to 529 (GIDR) lines the ATP pocket.

The protein belongs to the class-II aminoacyl-tRNA synthetase family. Type 1 subfamily. As to quaternary structure, homodimer.

It localises to the cytoplasm. The catalysed reaction is tRNA(Asp) + L-aspartate + ATP = L-aspartyl-tRNA(Asp) + AMP + diphosphate. In terms of biological role, catalyzes the attachment of L-aspartate to tRNA(Asp) in a two-step reaction: L-aspartate is first activated by ATP to form Asp-AMP and then transferred to the acceptor end of tRNA(Asp). This chain is Aspartate--tRNA ligase, found in Mesoplasma florum (strain ATCC 33453 / NBRC 100688 / NCTC 11704 / L1) (Acholeplasma florum).